The chain runs to 348 residues: tRNA N6-adenosine threonylcarbamoyltransferase (348 aa).

Fe cation is bound by residues H115 and H119. Substrate contacts are provided by residues L137–G141, D170, G183, and N281. D309 contacts Fe cation.

It belongs to the KAE1 / TsaD family. Fe(2+) is required as a cofactor.

The protein localises to the cytoplasm. It carries out the reaction L-threonylcarbamoyladenylate + adenosine(37) in tRNA = N(6)-L-threonylcarbamoyladenosine(37) in tRNA + AMP + H(+). Functionally, required for the formation of a threonylcarbamoyl group on adenosine at position 37 (t(6)A37) in tRNAs that read codons beginning with adenine. Is involved in the transfer of the threonylcarbamoyl moiety of threonylcarbamoyl-AMP (TC-AMP) to the N6 group of A37, together with TsaE and TsaB. TsaD likely plays a direct catalytic role in this reaction. The chain is tRNA N6-adenosine threonylcarbamoyltransferase from Methylobacterium sp. (strain 4-46).